Here is a 271-residue protein sequence, read N- to C-terminus: Type III pantothenate kinase (271 aa).

ATP is bound at residue 6-13 (DVRNTNIV). Residue 109–112 (GADR) coordinates substrate. The active-site Proton acceptor is Asp-111. Asp-131 contributes to the K(+) binding site. Thr-134 provides a ligand contact to ATP. Thr-186 contributes to the substrate binding site.

Belongs to the type III pantothenate kinase family. Homodimer. NH4(+) serves as cofactor. K(+) is required as a cofactor.

It localises to the cytoplasm. The enzyme catalyses (R)-pantothenate + ATP = (R)-4'-phosphopantothenate + ADP + H(+). It participates in cofactor biosynthesis; coenzyme A biosynthesis; CoA from (R)-pantothenate: step 1/5. Catalyzes the phosphorylation of pantothenate (Pan), the first step in CoA biosynthesis. The sequence is that of Type III pantothenate kinase from Rhodococcus erythropolis (strain PR4 / NBRC 100887).